Here is a 260-residue protein sequence, read N- to C-terminus: Putative protein phosphatase 2C-like protein 44 (260 aa).

One can recognise a PPM-type phosphatase domain in the interval 41-259 (YYTVDRLSYA…SSISCVVIRF (219 aa)).

It belongs to the PP2C family.

This chain is Putative protein phosphatase 2C-like protein 44, found in Arabidopsis thaliana (Mouse-ear cress).